Reading from the N-terminus, the 637-residue chain is Early transcription factor 70 kDa subunit (637 aa).

Residues 32–185 form the Helicase ATP-binding domain; sequence RTIIDENRSV…GHIIDLMSEE (154 aa). Position 45-52 (45-52) interacts with ATP; that stretch reads HIMGSGKT. A DEXH box motif is present at residues 135–138; it reads DEAH. The Helicase C-terminal domain maps to 327–507; that stretch reads KFKYFINRIQ…VLPFDIKKLL (181 aa).

This sequence belongs to the helicase family. VETF subfamily. As to quaternary structure, heterodimer of a 70 kDa and a 82 kDa subunit. Part of the early transcription complex composed of ETF, RAP94/OPG109, and the DNA-directed RNA polymerase.

It localises to the virion. Functionally, acts with RNA polymerase to initiate transcription from early gene promoters. Is recruited by the RPO-associated protein of 94 kDa RAP94/OPG109 to form the early transcription complex, which also contains the core RNA polymerase. ETF heterodimer binds to early gene promoters. This is Early transcription factor 70 kDa subunit (OPG118) from Homo sapiens (Human).